The primary structure comprises 356 residues: 16-methoxy-2,3-dihydro-3-hydroxytabersonine synthase (356 aa).

Positions 49, 71, 102, 105, 108, 116, and 162 each coordinate Zn(2+). 187 to 192 (GLGAVG) provides a ligand contact to NAD(+).

It belongs to the zinc-containing alcohol dehydrogenase family. Zn(2+) serves as cofactor. As to expression, expressed in leaf epidermis.

The enzyme catalyses (3R)-3-hydroxy-16-methoxy-2,3-dihydrotabersonine + A = (3R)-1,2-didehydro-3-hydroxy-16-methoxy-2,3-dihydrotabersonine + AH2. The catalysed reaction is (3R)-3-hydroxy-2,3-dihydrotabersonine + A = (3R)-1,2-didehydro-3-hydroxy-2,3-dihydrotabersonine + AH2. Its pathway is alkaloid biosynthesis; vindoline biosynthesis. Functionally, converts the unstable imine alcohols produced by CYP71D1V2/T3O into 3-hydroxy-16-methoxy-2,3-dihydrotabersonine or 3-hydroxy-2,3-dihydrotabersonine. The chain is 16-methoxy-2,3-dihydro-3-hydroxytabersonine synthase from Catharanthus roseus (Madagascar periwinkle).